The sequence spans 305 residues: Olfactory receptor 4F17 (305 aa).

The Extracellular portion of the chain corresponds to 1–18 (MVTEFIFLGLSDSQGLQT). Residues 19–42 (FLFMLFFVFYGGIVFGNLLIVITV) form a helical membrane-spanning segment. Over 43–50 (VSDSHLHS) the chain is Cytoplasmic. Residues 51–72 (PMYFLLANLSLIDLSLSSVTAP) form a helical membrane-spanning segment. Over 73–93 (KMITDFFSQRKVISFKGCLVQ) the chain is Extracellular. Cysteines 90 and 182 form a disulfide. Residues 94-113 (IFLLHFFGGSEMVILIAMGF) form a helical membrane-spanning segment. Residues 114-132 (DRYIAICKPLHYTTIMCGN) lie on the Cytoplasmic side of the membrane. The helical transmembrane segment at 133 to 151 (ACVGIMAVAWGIGFLHSVS) threads the bilayer. The Extracellular segment spans residues 152–188 (QLAFAVHLPFCGPNEVDSFYCDLPRVIKLACTDTYRL). The helical transmembrane segment at 189–212 (DIMVIANSGVLTVCSFVLLIISYT) threads the bilayer. Topologically, residues 213 to 228 (IILMTIQHRPLDKSSK) are cytoplasmic. A helical transmembrane segment spans residues 229–251 (ALSTLTAHITVVLLFFGPCVFIY). The Extracellular segment spans residues 252-262 (AWPFPIKSLDK). A helical membrane pass occupies residues 263-282 (FLAVFYSVITPLLNPIIYTL). At 283–305 (RNKDMKTAIRQLRKWDAHSSVKF) the chain is on the cytoplasmic side.

It belongs to the G-protein coupled receptor 1 family.

It localises to the cell membrane. Odorant receptor. The protein is Olfactory receptor 4F17 (OR4F17) of Homo sapiens (Human).